The sequence spans 197 residues: Holliday junction branch migration complex subunit RuvA (197 aa).

The domain I stretch occupies residues 1–64; sequence MIGRLRGIVA…EDSVSLYGFL (64 aa). Residues 65–143 form a domain II region; that stretch reads REGERRLFRD…QFGAGGALPT (79 aa). A flexible linker region spans residues 144 to 153; it reads GSGPAPADPL. The domain III stretch occupies residues 153 to 197; that stretch reads LSDATVALQQLGYKPAEAARMAREAFNEGDEVAIVIRKALQSALR.

Belongs to the RuvA family. As to quaternary structure, homotetramer. Forms an RuvA(8)-RuvB(12)-Holliday junction (HJ) complex. HJ DNA is sandwiched between 2 RuvA tetramers; dsDNA enters through RuvA and exits via RuvB. An RuvB hexamer assembles on each DNA strand where it exits the tetramer. Each RuvB hexamer is contacted by two RuvA subunits (via domain III) on 2 adjacent RuvB subunits; this complex drives branch migration. In the full resolvosome a probable DNA-RuvA(4)-RuvB(12)-RuvC(2) complex forms which resolves the HJ.

It localises to the cytoplasm. In terms of biological role, the RuvA-RuvB-RuvC complex processes Holliday junction (HJ) DNA during genetic recombination and DNA repair, while the RuvA-RuvB complex plays an important role in the rescue of blocked DNA replication forks via replication fork reversal (RFR). RuvA specifically binds to HJ cruciform DNA, conferring on it an open structure. The RuvB hexamer acts as an ATP-dependent pump, pulling dsDNA into and through the RuvAB complex. HJ branch migration allows RuvC to scan DNA until it finds its consensus sequence, where it cleaves and resolves the cruciform DNA. The sequence is that of Holliday junction branch migration complex subunit RuvA from Stenotrophomonas maltophilia (strain R551-3).